We begin with the raw amino-acid sequence, 331 residues long: Glucan endo-1,3-beta-glucosidase, acidic isoform GL161 (331 aa).

A signal peptide spans 1–9; the sequence is MCSIQIIGA. Gln10 bears the Pyrrolidone carboxylic acid mark. Asn55 and Asn75 each carry an N-linked (GlcNAc...) asparagine glycan. Glu244 functions as the Nucleophile in the catalytic mechanism.

This sequence belongs to the glycosyl hydrolase 17 family. In terms of tissue distribution, is expressed primarily in epidermal cell of healthy plant, and following induction by ethylene, accumulates in mesophyll cells.

The protein localises to the secreted. Its subcellular location is the extracellular space. The catalysed reaction is Hydrolysis of (1-&gt;3)-beta-D-glucosidic linkages in (1-&gt;3)-beta-D-glucans.. Its function is as follows. Is thought to be an important plant defense-related product against fungal pathogens. The chain is Glucan endo-1,3-beta-glucosidase, acidic isoform GL161 from Nicotiana tabacum (Common tobacco).